The following is a 334-amino-acid chain: Anthranilate phosphoribosyltransferase (334 aa).

5-phospho-alpha-D-ribose 1-diphosphate-binding positions include Gly-81, 84–85, Thr-89, 91–94, 109–117, and Ala-121; these read GD, NIST, and KHGSRSVSS. Anthranilate is bound at residue Gly-81. Mg(2+) is bound at residue Ser-93. Position 167 (Arg-167) interacts with anthranilate. Mg(2+)-binding residues include Asp-225 and Glu-226.

The protein belongs to the anthranilate phosphoribosyltransferase family. As to quaternary structure, homodimer. It depends on Mg(2+) as a cofactor.

It carries out the reaction N-(5-phospho-beta-D-ribosyl)anthranilate + diphosphate = 5-phospho-alpha-D-ribose 1-diphosphate + anthranilate. The protein operates within amino-acid biosynthesis; L-tryptophan biosynthesis; L-tryptophan from chorismate: step 2/5. In terms of biological role, catalyzes the transfer of the phosphoribosyl group of 5-phosphorylribose-1-pyrophosphate (PRPP) to anthranilate to yield N-(5'-phosphoribosyl)-anthranilate (PRA). The chain is Anthranilate phosphoribosyltransferase from Actinobacillus pleuropneumoniae serotype 5b (strain L20).